A 318-amino-acid polypeptide reads, in one-letter code: Glutathione synthetase (318 aa).

One can recognise an ATP-grasp domain in the interval 129 to 314 (KLAITEFPDL…VPEMFAVALE (186 aa)). 155-211 (HAAQGDVIVKPLDGMGGTGIFRLQRSEPNLNAILETLTDNGTRTIMAQRYIPEIVKG) provides a ligand contact to ATP. 2 residues coordinate Mg(2+): Glu285 and Asn287.

The protein belongs to the prokaryotic GSH synthase family. The cofactor is Mg(2+). Mn(2+) is required as a cofactor.

The catalysed reaction is gamma-L-glutamyl-L-cysteine + glycine + ATP = glutathione + ADP + phosphate + H(+). Its pathway is sulfur metabolism; glutathione biosynthesis; glutathione from L-cysteine and L-glutamate: step 2/2. The polypeptide is Glutathione synthetase (Bordetella bronchiseptica (strain ATCC BAA-588 / NCTC 13252 / RB50) (Alcaligenes bronchisepticus)).